Consider the following 361-residue polypeptide: POU domain, class 3, transcription factor 4-A (361 aa).

Disordered stretches follow at residues 100 to 131 (HVNHHSPHTNHPNAWGASPAHNSSLTSSGQPI), 150 to 189 (LTPPLPAGTTQSLHPVLREPNDHVDLGSHHCQDHSDEETP), and 333 to 361 (EKRMTPPGDPQQHEVYSHSVKTDTSCNEL). The span at 119-131 (AHNSSLTSSGQPI) shows a compositional bias: polar residues. The span at 165 to 183 (VLREPNDHVDLGSHHCQDH) shows a compositional bias: basic and acidic residues. A POU-specific domain is found at 186-260 (EETPTSDELE…LLNKWLEEAD (75 aa)). The segment at residues 278–337 (KRKKRTSIEVSVKGVLETHFLKCPKPAALEITSLADSLQLEKEVVRVWFCNRRQKEKRMT) is a DNA-binding region (homeobox).

It belongs to the POU transcription factor family. Class-3 subfamily. In terms of tissue distribution, from embryonic stage 10, expressed in the Spemann's organizer. During gastrulation, expressed in both the involuting mesoderm and the overlying neuroectoderm. During the neural plate and neural fold stages, expressed in the entire neuroectoderm with expression in discrete regions of the developing nervous system persisting at later stages. Transiently expressed in the pronephros from stages 24-32. In adults, expressed in the kidney and brain.

Its subcellular location is the nucleus. Its function is as follows. Transcriptional activator. Induces neural-specific gene expression to act as a key regulator of neural differentiation. The sequence is that of POU domain, class 3, transcription factor 4-A (pou3f4-a) from Xenopus laevis (African clawed frog).